The chain runs to 205 residues: Cytochrome c biogenesis ATP-binding export protein CcmA (205 aa).

The region spanning 2 to 204 is the ABC transporter domain; sequence LEVSNLTAIR…SPKLRKIKLG (203 aa). 34 to 41 is an ATP binding site; it reads GRNGTGKT.

Belongs to the ABC transporter superfamily. CcmA exporter (TC 3.A.1.107) family. As to quaternary structure, the complex is composed of two ATP-binding proteins (CcmA) and two transmembrane proteins (CcmB).

It is found in the cell inner membrane. It catalyses the reaction heme b(in) + ATP + H2O = heme b(out) + ADP + phosphate + H(+). Functionally, part of the ABC transporter complex CcmAB involved in the biogenesis of c-type cytochromes; once thought to export heme, this seems not to be the case, but its exact role is uncertain. Responsible for energy coupling to the transport system. The sequence is that of Cytochrome c biogenesis ATP-binding export protein CcmA from Vibrio parahaemolyticus serotype O3:K6 (strain RIMD 2210633).